The sequence spans 370 residues: Pyruvate dehydrogenase E1 component subunit alpha (370 aa).

In terms of assembly, heterodimer of an alpha and a beta chain. Requires thiamine diphosphate as cofactor.

It catalyses the reaction N(6)-[(R)-lipoyl]-L-lysyl-[protein] + pyruvate + H(+) = N(6)-[(R)-S(8)-acetyldihydrolipoyl]-L-lysyl-[protein] + CO2. Its function is as follows. The pyruvate dehydrogenase complex catalyzes the overall conversion of pyruvate to acetyl-CoA and CO(2). It contains multiple copies of three enzymatic components: pyruvate dehydrogenase (E1), dihydrolipoamide acetyltransferase (E2) and lipoamide dehydrogenase (E3). This chain is Pyruvate dehydrogenase E1 component subunit alpha (pdhA), found in Staphylococcus epidermidis (strain ATCC 35984 / DSM 28319 / BCRC 17069 / CCUG 31568 / BM 3577 / RP62A).